The sequence spans 807 residues: MTPPVGNNPPSGSAIRLAKLMSTTRAPSTRKTNSVFSAYAQGLKRKAEASSSRIQNVRARARGHGCGRTSPSSSTAEAERHFIQSVSSSNANGTATDPSQDDMAIVHEPQPQPQPQPEPQPQPQPEPEEEAPQKRAKKCTSDVWQHFTKKEIEVEVDGKKYVQVWGHCNFPNCKAKYRAEGHHGTSGFRNHLRTSHSLVKGQLCLKSEKDHGKDINLIEPYKYDEVVSLKKLHLAIIMHEYPFNIVEHEYFVEFVKSLRPHFPIKSRVTARKYIMDLYLEEKEKLYGKLKDVQSRFSTTMDMWTSCQNKSYMCVTIHWIDDDWCLQKRIVGFFHVEGRHTGQRLSQTFTAIMVKWNIEKKLFALSLDNASANEVAVHDIIEDLQDTDSNLVCDGAFFHVRCACHILNLVAKDGLAVIAGTIEKIKAIVLAVKSSPLQWEELMKCASECDLDKSKGISYDVSTRWNSTYLMLRDALYYKPALIRLKTSDPRRYDAICPKAEEWKMALTLFKCLKKFFDLTELLSGTQYSTANLFYKGFCEIKDLIDQWCVHEKFVIRRMAVAMSEKFEKYWKVSNIALAVACFLDPRYKKILIEFYMKKFHGDSYKVHVDDFVRVIRKLYQFYSSCSPSAPKTKTTTNDSMDDTLMENEDDEFQNYLHELKDYDQVESNELDKYMSEPLLKHSGQFDILSWWRGRVAEYPILTQIARDVLAIQVSTVASESAFSAGGRVVDPYRNRLGSEIVEALICTKDWVAASRKGATYFPTMIGDLEVLDSVIAAATNHENHMDEDEDAIEFSKNNEDVASGSSP.

Disordered regions lie at residues 42–140 (GLKR…KKCT) and 785–807 (MDED…GSSP). Residues 84-98 (QSVSSSNANGTATDP) show a composition bias toward polar residues. 10 tandem repeats follow at residues 109–110 (PQ), 111–112 (PQ), 113–114 (PQ), 115–116 (PQ), 117–118 (PE), 119–120 (PQ), 121–122 (PQ), 123–124 (PQ), 125–126 (PE), and 127–128 (PE). Positions 109 to 128 (PQPQPQPQPEPQPQPQPEPE) are 10 X 2 AA tandem repeats of P-[QE]. Pro residues predominate over residues 110–125 (QPQPQPQPEPQPQPQP).

The polypeptide is Putative AC transposase (Zea mays (Maize)).